Reading from the N-terminus, the 157-residue chain is 6,7-dimethyl-8-ribityllumazine synthase (157 aa).

5-amino-6-(D-ribitylamino)uracil contacts are provided by residues Trp27, 59–61, and 81–83; these read AIE and VVI. Position 86-87 (86-87) interacts with (2S)-2-hydroxy-3-oxobutyl phosphate; that stretch reads ET. The active-site Proton donor is His89. Asn114 lines the 5-amino-6-(D-ribitylamino)uracil pocket. Arg128 provides a ligand contact to (2S)-2-hydroxy-3-oxobutyl phosphate.

This sequence belongs to the DMRL synthase family. Homopentamer.

It catalyses the reaction (2S)-2-hydroxy-3-oxobutyl phosphate + 5-amino-6-(D-ribitylamino)uracil = 6,7-dimethyl-8-(1-D-ribityl)lumazine + phosphate + 2 H2O + H(+). The protein operates within cofactor biosynthesis; riboflavin biosynthesis; riboflavin from 2-hydroxy-3-oxobutyl phosphate and 5-amino-6-(D-ribitylamino)uracil: step 1/2. Catalyzes the formation of 6,7-dimethyl-8-ribityllumazine by condensation of 5-amino-6-(D-ribitylamino)uracil with 3,4-dihydroxy-2-butanone 4-phosphate. This is the penultimate step in the biosynthesis of riboflavin. The polypeptide is 6,7-dimethyl-8-ribityllumazine synthase (Mycolicibacterium vanbaalenii (strain DSM 7251 / JCM 13017 / BCRC 16820 / KCTC 9966 / NRRL B-24157 / PYR-1) (Mycobacterium vanbaalenii)).